The primary structure comprises 65 residues: Large ribosomal subunit protein bL35 (65 aa).

Residues 1 to 23 (MPKIKTNRGAAKRFKKTGTGKVK) are disordered. Residues 10–23 (AAKRFKKTGTGKVK) show a composition bias toward basic residues.

The protein belongs to the bacterial ribosomal protein bL35 family.

In Trichlorobacter lovleyi (strain ATCC BAA-1151 / DSM 17278 / SZ) (Geobacter lovleyi), this protein is Large ribosomal subunit protein bL35.